The sequence spans 744 residues: Prestin (744 aa).

The Cytoplasmic portion of the chain corresponds to methionine 1–lysine 75. Residues phenylalanine 76–leucine 104 traverse the membrane as a helical segment. Residues alanine 105–proline 108 are Extracellular-facing. Residues proline 109–phenylalanine 126 form a helical membrane-spanning segment. Residues glycine 127 to phenylalanine 137 lie on the Cytoplasmic side of the membrane. Residues alanine 138 to valine 149 form a helical membrane-spanning segment. Residues arginine 150 to threonine 168 are Extracellular-facing. The Involved in motor function motif lies at isoleucine 158–threonine 168. Residues asparagine 163 and asparagine 166 are each glycosylated (N-linked (GlcNAc...) asparagine). Residues glutamate 169 to cysteine 196 traverse the membrane as a helical segment. Residues arginine 197–threonine 206 lie on the Cytoplasmic side of the membrane. Residues glutamate 207–phenylalanine 230 traverse the membrane as a helical segment. Topologically, residues glycine 231 to phenylalanine 241 are extracellular. An intramembrane region (helical) is located at residues serine 242 to asparagine 253. Residues valine 254–asparagine 258 lie on the Extracellular side of the membrane. The chain crosses the membrane as a helical span at residues valine 259–lysine 276. The Cytoplasmic portion of the chain corresponds to glutamate 277 to proline 291. A helical membrane pass occupies residues leucine 292–phenylalanine 307. At asparagine 308 to aspartate 332 the chain is on the extracellular side. The helical transmembrane segment at threonine 333–lysine 359 threads the bilayer. Topologically, residues threonine 360–aspartate 370 are cytoplasmic. The chain crosses the membrane as a helical span at residues glycine 371–phenylalanine 388. The Extracellular portion of the chain corresponds to glutamine 389 to serine 396. The helical transmembrane segment at leucine 397–threonine 406 threads the bilayer. Serine 398 serves as a coordination point for salicylate. The Cytoplasmic portion of the chain corresponds to glycine 407 to threonine 410. Residues glutamine 411–leucine 431 traverse the membrane as a helical segment. Topologically, residues phenylalanine 432–proline 436 are extracellular. The chain crosses the membrane as a helical span at residues glutamine 437–threonine 464. Residue serine 465 is a topological domain, cytoplasmic. Residues lysine 466–phenylalanine 481 form a helical membrane-spanning segment. The Extracellular segment spans residues leucine 482–leucine 484. The chain crosses the membrane as a helical span at residues aspartate 485 to glutamine 504. The tract at residues serine 505–alanine 718 is extended region for STAS domain. Over serine 505–alanine 744 the chain is Cytoplasmic. Positions alanine 525 to serine 713 constitute an STAS domain. The disordered stretch occupies residues alanine 720–alanine 744.

This sequence belongs to the SLC26A/SulP transporter (TC 2.A.53) family. In terms of assembly, homodimer. Interacts (via STAS domain) with CALM; this interaction is calcium-dependent and the STAS domain interacts with only one lobe of CALM which is an elongated conformation. Interacts with MYH1. As to expression, specifically expressed in outer hair cells of cochleae (at protein level). Not detected in other cells of the organ of Corti.

It is found in the lateral cell membrane. The enzyme catalyses 2 hydrogencarbonate(in) + chloride(out) = 2 hydrogencarbonate(out) + chloride(in). Its activity is regulated as follows. Salicylate, an inhibitor of outer hair cell motility, acts as a competitive antagonist at the prestin anion-binding site. Its function is as follows. Voltage-sensitive motor protein that drives outer hair cell (OHC) electromotility (eM) and participates in sound amplification in the hearing organ. Converts changes in the transmembrane electric potential into mechanical displacements resulting in the coupling of its expansion to movement of a charged voltage sensor across the lipid membrane. The nature of the voltage sensor is not completely clear, and two models compete. In the first model, acts as an incomplete transporter where intracellular chloride anion acts as extrinsic voltage sensor that drives conformational change in the protein which is sufficient to produce a length change in the plane of the membrane and hence in the length of the OHC. The second model in which multiple charged amino acid residues are distributed at the intracellular and extracellular membrane interfaces that form an intrinsic voltage sensor, whose movement produces the non-linear capacitance (NLC). However, the effective voltage sensor may be the result of a hybrid voltage sensor assembled from intrinsic charge (charged residues) and extrinsic charge (bound anion). Notably, binding of anions to the anion-binding pocket partially neutralizes the intrinsic positive charge rather than to form an electrically negative sensor, therefore remaining charge may serve as voltage sensor that, after depolarization, moves from down (expanded state) to up (contracted) conformation, which is accompanied by an eccentric contraction of the intermembrane cross-sectional area of the protein as well as a major increase in the hydrophobic thickness of the protein having as consequences the plasma membrane thickening and the cell contraction after membrane depolarization. The anion-binding pocket transits from the inward-open (Down) state, where it is exposed toward the intracellular solvent in the absence of anion, to the occluded (Up) state upon anion binding. Salicylate competes for the anion-binding site and inhibits the voltage-sensor movement, and therefore inhibits the charge transfer and electromotility by displacing Cl(-) from the anion-binding site and by preventing the structural transitions to the contracted state. In addition, can act as a weak Cl(-)/HCO3(-) antiporter across the cell membrane and so regulate the intracellular pH of the outer hair cells (OHCs), while firstly found as being unable to mediate electrogenic anion transport. Moreover, supports a role in cardiac mechanical amplification serving as an elastic element to enhance the actomyosin- based sarcomere contraction system. This Rattus norvegicus (Rat) protein is Prestin.